Reading from the N-terminus, the 344-residue chain is N-acetyl-gamma-glutamyl-phosphate reductase (344 aa).

Cys-148 is a catalytic residue.

Belongs to the NAGSA dehydrogenase family. Type 1 subfamily.

Its subcellular location is the cytoplasm. It carries out the reaction N-acetyl-L-glutamate 5-semialdehyde + phosphate + NADP(+) = N-acetyl-L-glutamyl 5-phosphate + NADPH + H(+). Its pathway is amino-acid biosynthesis; L-arginine biosynthesis; N(2)-acetyl-L-ornithine from L-glutamate: step 3/4. Catalyzes the NADPH-dependent reduction of N-acetyl-5-glutamyl phosphate to yield N-acetyl-L-glutamate 5-semialdehyde. This Geobacillus thermodenitrificans (strain NG80-2) protein is N-acetyl-gamma-glutamyl-phosphate reductase.